We begin with the raw amino-acid sequence, 348 residues long: NADH-quinone oxidoreductase subunit H (348 aa).

The next 8 membrane-spanning stretches (helical) occupy residues 25 to 45 (ILFLVGQALVIFLVVVIVAAL), 95 to 115 (FMFILAPAVAMFTALASFAII), 128 to 148 (IGILFFFAMAGMAVYAVMFGG), 168 to 188 (ISYEVFLGLSLMGVVAMTGSF), 204 to 224 (WNIFPQFLGFLTFVVAGVAVT), 254 to 274 (FFIGEYVNVVLISALMTCLFF), 287 to 307 (ILPPAFWFMIKTLFFMTMFVL), and 327 to 347 (VCLPVTLINLMITAALILISA).

Belongs to the complex I subunit 1 family. As to quaternary structure, NDH-1 is composed of 14 different subunits. Subunits NuoA, H, J, K, L, M, N constitute the membrane sector of the complex.

Its subcellular location is the cell inner membrane. The enzyme catalyses a quinone + NADH + 5 H(+)(in) = a quinol + NAD(+) + 4 H(+)(out). In terms of biological role, NDH-1 shuttles electrons from NADH, via FMN and iron-sulfur (Fe-S) centers, to quinones in the respiratory chain. The immediate electron acceptor for the enzyme in this species is believed to be ubiquinone. Couples the redox reaction to proton translocation (for every two electrons transferred, four hydrogen ions are translocated across the cytoplasmic membrane), and thus conserves the redox energy in a proton gradient. This subunit may bind ubiquinone. This Psychrobacter sp. (strain PRwf-1) protein is NADH-quinone oxidoreductase subunit H.